Consider the following 140-residue polypeptide: Putative nickel-responsive regulator 2 (140 aa).

4 residues coordinate Ni(2+): histidine 77, histidine 88, histidine 90, and cysteine 96.

It belongs to the transcriptional regulatory CopG/NikR family. Ni(2+) is required as a cofactor.

Functionally, transcriptional regulator. The sequence is that of Putative nickel-responsive regulator 2 from Methanothermobacter thermautotrophicus (strain ATCC 29096 / DSM 1053 / JCM 10044 / NBRC 100330 / Delta H) (Methanobacterium thermoautotrophicum).